Reading from the N-terminus, the 610-residue chain is Scarecrow-like protein 11 (610 aa).

3 disordered regions span residues 32-54, 98-159, and 186-220; these read NNLFPDFHESQNQSSPNDSPPTV, QQSP…RRNK, and QEEEEERTVITKQSTPNRAGRAKGSSNKSKTHKTN. Composition is skewed to low complexity over residues 41–52 and 99–119; these read SQNQSSPNDSPP and QSPESDQNTSSSSDQNSGDQD. Composition is skewed to polar residues over residues 123–137 and 209–220; these read PSTTTDSSALVSSGE and GSSNKSKTHKTN. Residues 215 to 598 enclose the GRAS domain; it reads KTHKTNTVDL…RVIYAFSCWK (384 aa). The tract at residues 222 to 283 is leucine repeat I (LRI); the sequence is VDLRSLLTQC…ARITGNISPP (62 aa). The tract at residues 302-367 is VHIID; the sequence is YKLFVHTCPI…GGPPMLRVTG (66 aa). A VHIID motif is present at residues 333–337; the sequence is LHIVD. Residues 383–415 form a leucine repeat II (LRII) region; that stretch reads ETGRRLKRFCDQFNVPFEFNFIAKKWETITLDE. Positions 424-520 are PFYRE; the sequence is TVVNCIHRLQ…RELLVRDAMS (97 aa). Residues 523 to 598 are SAW; that stretch reads SCEGAERFAR…RVIYAFSCWK (76 aa).

The protein belongs to the GRAS family. Highly expressed in roots and at lower levels in leaves and sepals. Expressed in siliques.

The protein resides in the nucleus. In terms of biological role, probable transcription factor involved in plant development. The polypeptide is Scarecrow-like protein 11 (SCL11) (Arabidopsis thaliana (Mouse-ear cress)).